The following is a 120-amino-acid chain: Large ribosomal subunit protein bL19 (120 aa).

This sequence belongs to the bacterial ribosomal protein bL19 family.

Its function is as follows. This protein is located at the 30S-50S ribosomal subunit interface and may play a role in the structure and function of the aminoacyl-tRNA binding site. This is Large ribosomal subunit protein bL19 from Thermodesulfovibrio yellowstonii (strain ATCC 51303 / DSM 11347 / YP87).